The following is a 197-amino-acid chain: dITP/XTP pyrophosphatase (197 aa).

8-13 lines the substrate pocket; it reads TGNPGK. Mg(2+)-binding residues include Glu-40 and Asp-69. The active-site Proton acceptor is Asp-69. Substrate-binding positions include Ser-70, 154–157, Lys-177, and 182–183; these read FGYD and HR.

Belongs to the HAM1 NTPase family. In terms of assembly, homodimer. It depends on Mg(2+) as a cofactor.

The catalysed reaction is XTP + H2O = XMP + diphosphate + H(+). It carries out the reaction dITP + H2O = dIMP + diphosphate + H(+). The enzyme catalyses ITP + H2O = IMP + diphosphate + H(+). In terms of biological role, pyrophosphatase that catalyzes the hydrolysis of nucleoside triphosphates to their monophosphate derivatives, with a high preference for the non-canonical purine nucleotides XTP (xanthosine triphosphate), dITP (deoxyinosine triphosphate) and ITP. Seems to function as a house-cleaning enzyme that removes non-canonical purine nucleotides from the nucleotide pool, thus preventing their incorporation into DNA/RNA and avoiding chromosomal lesions. The protein is dITP/XTP pyrophosphatase of Pectobacterium atrosepticum (strain SCRI 1043 / ATCC BAA-672) (Erwinia carotovora subsp. atroseptica).